The following is a 352-amino-acid chain: tRNA pseudouridine synthase D (352 aa).

Residue Asp-81 is the Nucleophile of the active site. The TRUD domain occupies 157–303; that stretch reads GVPNYFGTQR…MDHERRILRL (147 aa).

This sequence belongs to the pseudouridine synthase TruD family.

The catalysed reaction is uridine(13) in tRNA = pseudouridine(13) in tRNA. In terms of biological role, responsible for synthesis of pseudouridine from uracil-13 in transfer RNAs. The protein is tRNA pseudouridine synthase D of Pseudomonas putida (strain ATCC 700007 / DSM 6899 / JCM 31910 / BCRC 17059 / LMG 24140 / F1).